Consider the following 181-residue polypeptide: Large ribosomal subunit protein uL5 (181 aa).

It belongs to the universal ribosomal protein uL5 family. Part of the 50S ribosomal subunit; part of the 5S rRNA/L5/L18/L25 subcomplex. Contacts the 5S rRNA and the P site tRNA. Forms a bridge to the 30S subunit in the 70S ribosome.

Functionally, this is one of the proteins that bind and probably mediate the attachment of the 5S RNA into the large ribosomal subunit, where it forms part of the central protuberance. In the 70S ribosome it contacts protein S13 of the 30S subunit (bridge B1b), connecting the 2 subunits; this bridge is implicated in subunit movement. Contacts the P site tRNA; the 5S rRNA and some of its associated proteins might help stabilize positioning of ribosome-bound tRNAs. This is Large ribosomal subunit protein uL5 from Baumannia cicadellinicola subsp. Homalodisca coagulata.